A 794-amino-acid chain; its full sequence is cAMP and cAMP-inhibited cGMP 3',5'-cyclic phosphodiesterase 10A (794 aa).

3',5'-cyclic AMP contacts are provided by residues 296–297, 340–341, threonine 374, glutamine 393, and histidine 525; these read RC and IA. Residues 452–769 form the PDEase domain; that stretch reads TSEEWQGLMH…NQWEKVIRGE (318 aa). The active-site Proton donor is the histidine 525. Histidine 525 serves as a coordination point for 3',5'-cyclic GMP. Positions 529, 563, 564, and 674 each coordinate a divalent metal cation. 3',5'-cyclic AMP is bound at residue glutamine 726. Glutamine 726 serves as a coordination point for 3',5'-cyclic GMP.

The protein belongs to the cyclic nucleotide phosphodiesterase family. Homodimer. It depends on a divalent metal cation as a cofactor. In terms of tissue distribution, detected in striatum and testis (at protein level). Detected in whole brain, hippocampus, olfactory bulb, striatum neurons and testis.

The protein localises to the cytoplasm. The protein resides in the cytosol. It carries out the reaction a nucleoside 3',5'-cyclic phosphate + H2O = a nucleoside 5'-phosphate + H(+). It catalyses the reaction 3',5'-cyclic AMP + H2O = AMP + H(+). The enzyme catalyses 3',5'-cyclic GMP + H2O = GMP + H(+). The protein operates within purine metabolism; 3',5'-cyclic AMP degradation; AMP from 3',5'-cyclic AMP: step 1/1. It participates in purine metabolism; 3',5'-cyclic GMP degradation; GMP from 3',5'-cyclic GMP: step 1/1. With respect to regulation, inhibited by dipyridamole and moderately by IBMX, zaprinast and rolipram. Its function is as follows. Plays a role in signal transduction by regulating the intracellular concentration of cyclic nucleotides. Can hydrolyze both cAMP and cGMP, but has higher affinity for cAMP and is more efficient with cAMP as substrate. The protein is cAMP and cAMP-inhibited cGMP 3',5'-cyclic phosphodiesterase 10A (Pde10a) of Rattus norvegicus (Rat).